Consider the following 189-residue polypeptide: Elongation factor P (189 aa).

At Lys-34 the chain carries N6-(3,6-diaminohexanoyl)-5-hydroxylysine.

The protein belongs to the elongation factor P family. In terms of processing, may be beta-lysylated on the epsilon-amino group of Lys-34 by the combined action of EpmA and EpmB, and then hydroxylated on the C5 position of the same residue by EpmC (if this protein is present). Lysylation is critical for the stimulatory effect of EF-P on peptide-bond formation. The lysylation moiety may extend toward the peptidyltransferase center and stabilize the terminal 3-CCA end of the tRNA. Hydroxylation of the C5 position on Lys-34 may allow additional potential stabilizing hydrogen-bond interactions with the P-tRNA.

The protein resides in the cytoplasm. It functions in the pathway protein biosynthesis; polypeptide chain elongation. In terms of biological role, involved in peptide bond synthesis. Alleviates ribosome stalling that occurs when 3 or more consecutive Pro residues or the sequence PPG is present in a protein, possibly by augmenting the peptidyl transferase activity of the ribosome. Modification of Lys-34 is required for alleviation. This Buchnera aphidicola subsp. Baizongia pistaciae (strain Bp) protein is Elongation factor P.